Consider the following 396-residue polypeptide: Tyrosine--tRNA ligase (396 aa).

Residues 43-52 (PSSPDIHLGH) carry the 'HIGH' region motif. The 'KMSKS' region motif lies at 227-231 (KMSKS). ATP is bound at residue K230. An S4 RNA-binding domain is found at 338 to 396 (TGVIDFIILSGLAKSKSEARRLLEQGAVEINSEKISDQNTPVKCGDIIKAGKRRYSKAI).

It belongs to the class-I aminoacyl-tRNA synthetase family. TyrS type 2 subfamily. Homodimer.

It is found in the cytoplasm. It carries out the reaction tRNA(Tyr) + L-tyrosine + ATP = L-tyrosyl-tRNA(Tyr) + AMP + diphosphate + H(+). In terms of biological role, catalyzes the attachment of tyrosine to tRNA(Tyr) in a two-step reaction: tyrosine is first activated by ATP to form Tyr-AMP and then transferred to the acceptor end of tRNA(Tyr). This is Tyrosine--tRNA ligase from Dehalococcoides mccartyi (strain CBDB1).